The following is a 211-amino-acid chain: Orotate phosphoribosyltransferase (211 aa).

Residues Arg-103, Lys-107, His-109, and 129–137 (EDLISTGKS) each bind 5-phospho-alpha-D-ribose 1-diphosphate. Residue Ser-133 coordinates orotate.

This sequence belongs to the purine/pyrimidine phosphoribosyltransferase family. PyrE subfamily. In terms of assembly, homodimer. It depends on Mg(2+) as a cofactor.

The catalysed reaction is orotidine 5'-phosphate + diphosphate = orotate + 5-phospho-alpha-D-ribose 1-diphosphate. It participates in pyrimidine metabolism; UMP biosynthesis via de novo pathway; UMP from orotate: step 1/2. Its function is as follows. Catalyzes the transfer of a ribosyl phosphate group from 5-phosphoribose 1-diphosphate to orotate, leading to the formation of orotidine monophosphate (OMP). The chain is Orotate phosphoribosyltransferase from Fusobacterium nucleatum subsp. nucleatum (strain ATCC 25586 / DSM 15643 / BCRC 10681 / CIP 101130 / JCM 8532 / KCTC 2640 / LMG 13131 / VPI 4355).